A 579-amino-acid chain; its full sequence is Arginine--tRNA ligase (579 aa).

A 'HIGH' region motif is present at residues 127–137; sequence ANPTGPLHVGH.

It belongs to the class-I aminoacyl-tRNA synthetase family. In terms of assembly, monomer.

Its subcellular location is the cytoplasm. The catalysed reaction is tRNA(Arg) + L-arginine + ATP = L-arginyl-tRNA(Arg) + AMP + diphosphate. The sequence is that of Arginine--tRNA ligase from Acidithiobacillus ferrooxidans (strain ATCC 23270 / DSM 14882 / CIP 104768 / NCIMB 8455) (Ferrobacillus ferrooxidans (strain ATCC 23270)).